Reading from the N-terminus, the 315-residue chain is MSNNAVYAVPQVKTTKTSSKTTFHFTAGLFSGLTSSILLQPADLLKTRVQQSQNASLLPTVKAILSSPNPIRNLWRGTLPSALRTGFGSALYFTSLNALRTGLVQTNGIAPVTNSSSALPKLSNTANLATGAAARVAAGFVMMPVTVIKVRYESDYYAYRSLFGAGRDIVRTEGFRGLFSGFGATAARDAPYAGLYVLFYEQLKRRLAGLSSSSSDQQPLKSSSINFVSGGLAAGLATTITNPFDAVKTRLQLMPGRYGNMMRAVRLMVQEDGVRSLFGGLGLRITRKALSSALAWTVYEELILRAEVQWGSKGE.

Solcar repeat units lie at residues serine 19–glycine 102, threonine 125–arginine 206, and lysine 221–arginine 305. Helical transmembrane passes span phenylalanine 25–glutamine 50, glycine 77–leucine 103, leucine 128–glutamate 153, glycine 181–lysine 204, isoleucine 225–leucine 251, and glycine 280–valine 298.

Belongs to the mitochondrial carrier (TC 2.A.29) family. SLC25A38 subfamily.

The protein localises to the mitochondrion inner membrane. The enzyme catalyses glycine(in) = glycine(out). Functionally, mitochondrial glycine transporter that imports glycine into the mitochondrial matrix. Plays an important role in providing glycine for the first enzymatic step in heme biosynthesis, the condensation of glycine with succinyl-CoA to produce 5-aminolevulinate (ALA) in the mitochondrial matrix. The polypeptide is Mitochondrial glycine transporter (Aspergillus niger (strain ATCC MYA-4892 / CBS 513.88 / FGSC A1513)).